Consider the following 380-residue polypeptide: Cytochrome b (380 aa).

The next 4 membrane-spanning stretches (helical) occupy residues 34 to 54, 78 to 99, 114 to 134, and 179 to 199; these read FGSL…LLAM, WLIR…YLHI, WNIG…GYVL, and LFAL…VHLT. Positions 84 and 98 each coordinate heme b. Heme b-binding residues include H183 and H197. H202 lines the a ubiquinone pocket. Helical transmembrane passes span 227–247, 289–309, 321–341, and 348–368; these read IKDL…ALFA, LGGV…PLLH, LSQM…WVGS, and FIII…VLFP.

The protein belongs to the cytochrome b family. The cytochrome bc1 complex contains 11 subunits: 3 respiratory subunits (MT-CYB, CYC1 and UQCRFS1), 2 core proteins (UQCRC1 and UQCRC2) and 6 low-molecular weight proteins (UQCRH/QCR6, UQCRB/QCR7, UQCRQ/QCR8, UQCR10/QCR9, UQCR11/QCR10 and a cleavage product of UQCRFS1). This cytochrome bc1 complex then forms a dimer. Requires heme b as cofactor.

The protein localises to the mitochondrion inner membrane. In terms of biological role, component of the ubiquinol-cytochrome c reductase complex (complex III or cytochrome b-c1 complex) that is part of the mitochondrial respiratory chain. The b-c1 complex mediates electron transfer from ubiquinol to cytochrome c. Contributes to the generation of a proton gradient across the mitochondrial membrane that is then used for ATP synthesis. The sequence is that of Cytochrome b (MT-CYB) from Aphelocoma coerulescens (Florida scrub-jay).